Consider the following 399-residue polypeptide: Acetate kinase (399 aa).

Asparagine 7 is a Mg(2+) binding site. Position 14 (lysine 14) interacts with ATP. Arginine 89 provides a ligand contact to substrate. Aspartate 146 acts as the Proton donor/acceptor in catalysis. ATP is bound by residues 206-210 (HLGNG), 280-282 (DMR), and 328-332 (GIGEN). Residue glutamate 382 coordinates Mg(2+).

The protein belongs to the acetokinase family. Homodimer. Mg(2+) serves as cofactor. The cofactor is Mn(2+).

The protein resides in the cytoplasm. It carries out the reaction acetate + ATP = acetyl phosphate + ADP. Its pathway is metabolic intermediate biosynthesis; acetyl-CoA biosynthesis; acetyl-CoA from acetate: step 1/2. Functionally, catalyzes the formation of acetyl phosphate from acetate and ATP. Can also catalyze the reverse reaction. The sequence is that of Acetate kinase from Campylobacter fetus subsp. fetus (strain 82-40).